A 489-amino-acid polypeptide reads, in one-letter code: Putative ABC transporter ATP-binding protein TDE_0282 (489 aa).

ABC transporter domains follow at residues 2 to 241 and 269 to 487; these read ITLR…SMKL and FAVK…MQLE. Residues 36–43 and 301–308 each bind ATP; these read GASGCGKT and GENGAGKT.

The protein belongs to the ABC transporter superfamily.

The protein localises to the cell inner membrane. Functionally, probably part of an ABC transporter complex. Responsible for energy coupling to the transport system. This Treponema denticola (strain ATCC 35405 / DSM 14222 / CIP 103919 / JCM 8153 / KCTC 15104) protein is Putative ABC transporter ATP-binding protein TDE_0282.